A 365-amino-acid polypeptide reads, in one-letter code: ADP-ribosylhydrolase ARH3 (365 aa).

The Mg(2+) site is built by Glu42, Thr77, Asp78, and Asp79. Asp78 contributes to the substrate binding site. Substrate contacts are provided by residues 147–153 (KGSYGNG), His183, Leu236, and Ile272. Residues Asp315, Asp317, and Thr318 each contribute to the Mg(2+) site.

Belongs to the ADP-ribosylglycohydrolase family. Monomer. Mg(2+) serves as cofactor.

The protein resides in the nucleus. It is found in the cytoplasm. Its subcellular location is the chromosome. It localises to the mitochondrion matrix. The enzyme catalyses [(1''-&gt;2')-ADP-alpha-D-ribose](n) + H2O = [(1''-&gt;2')-ADP-alpha-D-ribose](n-1) + ADP-D-ribose. The catalysed reaction is 1''-O-acetyl-ADP-alpha-D-ribose + H2O = ADP-D-ribose + acetate + H(+). It carries out the reaction O-(ADP-D-ribosyl)-L-seryl-[protein] + H2O = ADP-D-ribose + L-seryl-[protein]. It catalyses the reaction alpha-NAD(+) + H2O = ADP-D-ribose + nicotinamide + H(+). Its activity is regulated as follows. The protein undergoes a dramatic conformational switch from closed to open states upon substrate-binding, which enables specific substrate recognition for the 1''-O-linkage. The glutamate flap (Glu-42) blocks substrate entrance to Mg(2+) in the unliganded closed state. In presence of substrate, Glu-42 is ejected from the active site: this closed-to-open transition significantly widens the substrate-binding channel and precisely positions the scissile 1''-O-linkage for cleavage while securing tightly 2'- and 3'-hydroxyls of ADP-ribose. Functionally, ADP-ribosylhydrolase that preferentially hydrolyzes the scissile alpha-O-linkage attached to the anomeric C1'' position of ADP-ribose and acts on different substrates, such as proteins ADP-ribosylated on serine and threonine, free poly(ADP-ribose) and O-acetyl-ADP-D-ribose. Specifically acts as a serine mono-ADP-ribosylhydrolase by mediating the removal of mono-ADP-ribose attached to serine residues on proteins, thereby playing a key role in DNA damage response. Serine ADP-ribosylation of proteins constitutes the primary form of ADP-ribosylation of proteins in response to DNA damage. Does not hydrolyze ADP-ribosyl-arginine, -cysteine, -diphthamide, or -asparagine bonds. Also able to degrade protein free poly(ADP-ribose), which is synthesized in response to DNA damage: free poly(ADP-ribose) acts as a potent cell death signal and its degradation by ADPRHL2 protects cells from poly(ADP-ribose)-dependent cell death, a process named parthanatos. Also hydrolyzes free poly(ADP-ribose) in mitochondria. Specifically digests O-acetyl-ADP-D-ribose, a product of deacetylation reactions catalyzed by sirtuins. Specifically degrades 1''-O-acetyl-ADP-D-ribose isomer, rather than 2''-O-acetyl-ADP-D-ribose or 3''-O-acetyl-ADP-D-ribose isomers. In Bos taurus (Bovine), this protein is ADP-ribosylhydrolase ARH3 (ADPRS).